Consider the following 310-residue polypeptide: Tyrosine recombinase XerC (310 aa).

Positions 11 to 97 (NSLQKPLSRF…SLRSFFDFLV (87 aa)) constitute a Core-binding (CB) domain. The 181-residue stretch at 118-298 (PLPKNLDVDE…DFQHLAQAYD (181 aa)) folds into the Tyr recombinase domain. Catalysis depends on residues Arg-157, Lys-181, His-250, Arg-253, and His-276. Tyr-285 (O-(3'-phospho-DNA)-tyrosine intermediate) is an active-site residue.

The protein belongs to the 'phage' integrase family. XerC subfamily. In terms of assembly, forms a cyclic heterotetrameric complex composed of two molecules of XerC and two molecules of XerD.

The protein resides in the cytoplasm. In terms of biological role, site-specific tyrosine recombinase, which acts by catalyzing the cutting and rejoining of the recombining DNA molecules. The XerC-XerD complex is essential to convert dimers of the bacterial chromosome into monomers to permit their segregation at cell division. It also contributes to the segregational stability of plasmids. In Vibrio atlanticus (strain LGP32) (Vibrio splendidus (strain Mel32)), this protein is Tyrosine recombinase XerC.